The chain runs to 503 residues: Aspartyl/glutamyl-tRNA(Asn/Gln) amidotransferase subunit B (503 aa).

It belongs to the GatB/GatE family. GatB subfamily. In terms of assembly, heterotrimer of A, B and C subunits.

It carries out the reaction L-glutamyl-tRNA(Gln) + L-glutamine + ATP + H2O = L-glutaminyl-tRNA(Gln) + L-glutamate + ADP + phosphate + H(+). The enzyme catalyses L-aspartyl-tRNA(Asn) + L-glutamine + ATP + H2O = L-asparaginyl-tRNA(Asn) + L-glutamate + ADP + phosphate + 2 H(+). Functionally, allows the formation of correctly charged Asn-tRNA(Asn) or Gln-tRNA(Gln) through the transamidation of misacylated Asp-tRNA(Asn) or Glu-tRNA(Gln) in organisms which lack either or both of asparaginyl-tRNA or glutaminyl-tRNA synthetases. The reaction takes place in the presence of glutamine and ATP through an activated phospho-Asp-tRNA(Asn) or phospho-Glu-tRNA(Gln). The protein is Aspartyl/glutamyl-tRNA(Asn/Gln) amidotransferase subunit B of Mycolicibacterium smegmatis (strain ATCC 700084 / mc(2)155) (Mycobacterium smegmatis).